The sequence spans 190 residues: Frataxin homolog, mitochondrial (190 aa).

The protein belongs to the frataxin family. Monomer (probable predominant form). Oligomer. Interacts with IscU. Component of the mitochondrial core iron-sulfur cluster (ISC) assembly complex at least composed of the cysteine desulfurase Nfs1, the scaffold protein IscU, the accessory protein bcn92/Isd11/Lyrm4, and probably fh/frataxin.

The protein resides in the mitochondrion. The enzyme catalyses 4 Fe(2+) + O2 + 4 H(+) = 4 Fe(3+) + 2 H2O. Functionally, promotes the biosynthesis of heme as well as the assembly and repair of iron-sulfur clusters by delivering Fe(2+) to proteins involved in these pathways. May play a role in the protection against iron-catalyzed oxidative stress through its ability to catalyze the oxidation of Fe(2+) to Fe(3+). May be able to store large amounts of the metal in the form of a ferrihydrite mineral by oligomerization. Required for ecdysteroidogenesis in the prothoracic gland which is necessary for larval to pupal transition. The polypeptide is Frataxin homolog, mitochondrial (Drosophila melanogaster (Fruit fly)).